Reading from the N-terminus, the 176-residue chain is Ribosome maturation factor RimM (176 aa).

One can recognise a PRC barrel domain in the interval 97-176; the sequence is EDDFYWRDLI…QICVDWDPGF (80 aa).

The protein belongs to the RimM family. Binds ribosomal protein uS19.

Its subcellular location is the cytoplasm. Functionally, an accessory protein needed during the final step in the assembly of 30S ribosomal subunit, possibly for assembly of the head region. Essential for efficient processing of 16S rRNA. May be needed both before and after RbfA during the maturation of 16S rRNA. It has affinity for free ribosomal 30S subunits but not for 70S ribosomes. The polypeptide is Ribosome maturation factor RimM (Colwellia psychrerythraea (strain 34H / ATCC BAA-681) (Vibrio psychroerythus)).